The following is a 160-amino-acid chain: MTNTKGKRRGTRYMFSRPFRKHGVVPLATYMRIYRKGDIVDIKGMGTVQKGMPHKCYHGKTGRVYNVTQHAVGIIVNKQVKGKILAKRINVRIEHIKHSKSRDSFLKRVKENDQKKKEAKEKGTWVQLKRQPAPPREAHFVRTNGKEPELLEPIPYEFMA.

Composition is skewed to basic and acidic residues over residues 112–123 (NDQKKKEAKEKG) and 136–145 (REAHFVRTNG). Positions 112–145 (NDQKKKEAKEKGTWVQLKRQPAPPREAHFVRTNG) are disordered.

Belongs to the eukaryotic ribosomal protein eL21 family. In terms of assembly, component of the large ribosomal subunit.

Its subcellular location is the cytoplasm. The protein resides in the cytosol. It is found in the endoplasmic reticulum. Its function is as follows. Component of the large ribosomal subunit. The ribosome is a large ribonucleoprotein complex responsible for the synthesis of proteins in the cell. This chain is Large ribosomal subunit protein eL21 (RPL21), found in Capra hircus (Goat).